Reading from the N-terminus, the 243-residue chain is Type III pantothenate kinase (243 aa).

6-13 (DGGNTFIK) is a binding site for ATP. Substrate contacts are provided by residues Tyr87 and 94–97 (GKDR). The Proton acceptor role is filled by Asp96. Residue Asp117 participates in K(+) binding. Thr120 is an ATP binding site. Thr172 lines the substrate pocket.

The protein belongs to the type III pantothenate kinase family. Homodimer. NH4(+) serves as cofactor. Requires K(+) as cofactor.

It localises to the cytoplasm. The catalysed reaction is (R)-pantothenate + ATP = (R)-4'-phosphopantothenate + ADP + H(+). It participates in cofactor biosynthesis; coenzyme A biosynthesis; CoA from (R)-pantothenate: step 1/5. In terms of biological role, catalyzes the phosphorylation of pantothenate (Pan), the first step in CoA biosynthesis. The sequence is that of Type III pantothenate kinase from Christiangramia forsetii (strain DSM 17595 / CGMCC 1.15422 / KT0803) (Gramella forsetii).